The primary structure comprises 1394 residues: DNA-directed RNA polymerase subunit beta (1394 aa).

It belongs to the RNA polymerase beta chain family. The RNAP catalytic core consists of 2 alpha, 1 beta, 1 beta' and 1 omega subunit. When a sigma factor is associated with the core the holoenzyme is formed, which can initiate transcription.

It carries out the reaction RNA(n) + a ribonucleoside 5'-triphosphate = RNA(n+1) + diphosphate. DNA-dependent RNA polymerase catalyzes the transcription of DNA into RNA using the four ribonucleoside triphosphates as substrates. The chain is DNA-directed RNA polymerase subunit beta from Anaplasma phagocytophilum (Ehrlichia phagocytophila).